The chain runs to 120 residues: Chaperonin GroEL (120 aa).

23-27 is an ATP binding site; the sequence is DGTTT.

The protein belongs to the chaperonin (HSP60) family. In terms of assembly, forms a cylinder of 14 subunits composed of two heptameric rings stacked back-to-back. Interacts with the co-chaperonin GroES.

Its subcellular location is the cytoplasm. It carries out the reaction ATP + H2O + a folded polypeptide = ADP + phosphate + an unfolded polypeptide.. Together with its co-chaperonin GroES, plays an essential role in assisting protein folding. The GroEL-GroES system forms a nano-cage that allows encapsulation of the non-native substrate proteins and provides a physical environment optimized to promote and accelerate protein folding. This Mycobacterium xenopi protein is Chaperonin GroEL.